Consider the following 320-residue polypeptide: Ferrochelatase (320 aa).

Residues histidine 194 and glutamate 275 each contribute to the Fe cation site.

The protein belongs to the ferrochelatase family. In terms of assembly, monomer.

It is found in the cytoplasm. The catalysed reaction is heme b + 2 H(+) = protoporphyrin IX + Fe(2+). The protein operates within porphyrin-containing compound metabolism; protoheme biosynthesis; protoheme from protoporphyrin-IX: step 1/1. Catalyzes the ferrous insertion into protoporphyrin IX. In Escherichia coli (strain K12 / MC4100 / BW2952), this protein is Ferrochelatase.